The sequence spans 884 residues: Protein translocase subunit SecA (884 aa).

ATP contacts are provided by residues glutamine 83, 101-105 (GEGKT), and aspartate 491.

The protein belongs to the SecA family.

Its subcellular location is the plastid. The protein resides in the chloroplast stroma. The protein localises to the chloroplast thylakoid membrane. It carries out the reaction ATP + H2O + cellular proteinSide 1 = ADP + phosphate + cellular proteinSide 2.. Functionally, has a central role in coupling the hydrolysis of ATP to the transfer of proteins across the thylakoid membrane. The chain is Protein translocase subunit SecA from Porphyra purpurea (Red seaweed).